A 146-amino-acid polypeptide reads, in one-letter code: Protein MucA (146 aa).

Residues S62 and K99 each act as for autocatalytic cleavage activity in the active site.

Belongs to the peptidase S24 family.

Functionally, involved in UV protection and mutation. The sequence is that of Protein MucA (mucA) from Escherichia coli.